The sequence spans 626 residues: Beta-galactosidase large subunit (626 aa).

Catalysis depends on E466, which acts as the Proton donor. Residue E534 is the Nucleophile of the active site.

It belongs to the glycosyl hydrolase 2 family. Heterodimer of a large (LacL) and a small subunit (LacM).

The catalysed reaction is Hydrolysis of terminal non-reducing beta-D-galactose residues in beta-D-galactosides.. Its function is as follows. Component of a beta-galactosidase that displays activity with the artificial chromogenic substrate o-nitrophenyl-beta-D-galactopyranoside (ONPG). In Leuconostoc lactis, this protein is Beta-galactosidase large subunit.